We begin with the raw amino-acid sequence, 147 residues long: 3-hydroxyacyl-[acyl-carrier-protein] dehydratase FabZ (147 aa).

His46 is an active-site residue.

This sequence belongs to the thioester dehydratase family. FabZ subfamily.

It is found in the cytoplasm. The catalysed reaction is a (3R)-hydroxyacyl-[ACP] = a (2E)-enoyl-[ACP] + H2O. Involved in unsaturated fatty acids biosynthesis. Catalyzes the dehydration of short chain beta-hydroxyacyl-ACPs and long chain saturated and unsaturated beta-hydroxyacyl-ACPs. In Syntrophobacter fumaroxidans (strain DSM 10017 / MPOB), this protein is 3-hydroxyacyl-[acyl-carrier-protein] dehydratase FabZ.